Consider the following 477-residue polypeptide: Bifunctional protein HldE (477 aa).

Positions 1–318 are ribokinase; sequence MKVTLPDFRR…ENAIRGRADT (318 aa). 195-198 contributes to the ATP binding site; sequence NLSE. Residue Asp-264 is part of the active site. Residues 344–477 form a cytidylyltransferase region; sequence MTNGVFDILH…INIIRQGQND (134 aa).

The protein in the N-terminal section; belongs to the carbohydrate kinase PfkB family. It in the C-terminal section; belongs to the cytidylyltransferase family. Homodimer.

It carries out the reaction D-glycero-beta-D-manno-heptose 7-phosphate + ATP = D-glycero-beta-D-manno-heptose 1,7-bisphosphate + ADP + H(+). The enzyme catalyses D-glycero-beta-D-manno-heptose 1-phosphate + ATP + H(+) = ADP-D-glycero-beta-D-manno-heptose + diphosphate. The protein operates within nucleotide-sugar biosynthesis; ADP-L-glycero-beta-D-manno-heptose biosynthesis; ADP-L-glycero-beta-D-manno-heptose from D-glycero-beta-D-manno-heptose 7-phosphate: step 1/4. Its pathway is nucleotide-sugar biosynthesis; ADP-L-glycero-beta-D-manno-heptose biosynthesis; ADP-L-glycero-beta-D-manno-heptose from D-glycero-beta-D-manno-heptose 7-phosphate: step 3/4. Its function is as follows. Catalyzes the phosphorylation of D-glycero-D-manno-heptose 7-phosphate at the C-1 position to selectively form D-glycero-beta-D-manno-heptose-1,7-bisphosphate. Functionally, catalyzes the ADP transfer from ATP to D-glycero-beta-D-manno-heptose 1-phosphate, yielding ADP-D-glycero-beta-D-manno-heptose. The protein is Bifunctional protein HldE of Edwardsiella ictaluri (strain 93-146).